We begin with the raw amino-acid sequence, 297 residues long: MELNGVEIEDTFAEAFPIKISRILITAATKRWATVAAQEATGFGTSVIGCPAEAGIEKYADASETPDGRPGVYIQFCTFGFKSLEEQLLERVGQCILTAPTTAVFNGLPDAEKQFDTGRKLKYFADGTESETEVGGRKMHVIPMMEGDFLVEDTLGAVTAIAGGNFFIFGDTQMTTLTAAENAVDAIGAVDGTITPFPGGIVASGSKAGANKYKFLKATANEKFCPSIKDKVEGSEIPADVNCVYEIVINGLDFESIAKATEMGIRAAVAVPGIKKITAGNYGGSLGPHKFNLHDLF.

Belongs to the FTR family. In terms of assembly, homotetramer.

The protein resides in the cytoplasm. The catalysed reaction is N-formylmethanofuran + 5,6,7,8-tetrahydromethanopterin + H(+) = N(5)-formyl-5,6,7,8-tetrahydromethanopterin + methanofuran. The protein operates within one-carbon metabolism; methanogenesis from CO(2); 5,10-methenyl-5,6,7,8-tetrahydromethanopterin from CO(2): step 2/3. Functionally, catalyzes the reversible transfer of a formyl group from formylmethanofuran (formyl-MFR) to tetrahydromethanopterin (H(4)MPT) to produce 5-formyl tetrahydromethanopterin (5-formyl-H(4)MPT) and methanofuran (MFR). The protein is Formylmethanofuran--tetrahydromethanopterin formyltransferase of Methanococcoides burtonii (strain DSM 6242 / NBRC 107633 / OCM 468 / ACE-M).